Here is a 270-residue protein sequence, read N- to C-terminus: Chlorophyll a-b binding protein 7, chloroplastic (270 aa).

The transit peptide at Met-1–Val-42 directs the protein to the chloroplast. Trp-68 serves as a coordination point for chlorophyll b. Chlorophyll a is bound by residues Phe-88, Glu-107, and His-110. Position 112 (Arg-112) interacts with chlorophyll b. Residues Trp-113–Leu-133 traverse the membrane as a helical segment. Position 144 (Gln-144) interacts with chlorophyll a. Residues Tyr-146–Gly-166 form a helical membrane-spanning segment. Residues Ile-155, Glu-165, and Arg-168 each coordinate chlorophyll b. Lys-221, Glu-222, Asn-225, Arg-227, Gln-239, and His-254 together coordinate chlorophyll a. Residues Leu-228–Ile-248 form a helical membrane-spanning segment.

It belongs to the light-harvesting chlorophyll a/b-binding (LHC) protein family. As to quaternary structure, the LHC complex consists of chlorophyll a-b binding proteins. Requires Binds at least 14 chlorophylls (8 Chl-a and 6 Chl-b) and carotenoids such as lutein and neoxanthin. as cofactor. Photoregulated by reversible phosphorylation of its threonine residues.

The protein localises to the plastid. It is found in the chloroplast thylakoid membrane. The light-harvesting complex (LHC) functions as a light receptor, it captures and delivers excitation energy to photosystems with which it is closely associated. The sequence is that of Chlorophyll a-b binding protein 7, chloroplastic (CAB7) from Solanum lycopersicum (Tomato).